A 206-amino-acid polypeptide reads, in one-letter code: Glutathione S-transferase class-mu 28 kDa isozyme (206 aa).

Residues 1–81 (VKLIYFNGRG…FIARKHNMMG (81 aa)) enclose the GST N-terminal domain. Glutathione contacts are provided by residues Tyr5, 5 to 6 (YF), Arg11, 36 to 40 (WPKIK), Leu48, 50 to 51 (IV), and 65 to 66 (ES). The 124-residue stretch at 83–206 (TDDEYYIIEK…YLSERHATAF (124 aa)) folds into the GST C-terminal domain.

The protein belongs to the GST superfamily. Mu family. As to quaternary structure, homodimer.

The catalysed reaction is RX + glutathione = an S-substituted glutathione + a halide anion + H(+). Conjugation of reduced glutathione to a wide number of exogenous and endogenous hydrophobic electrophiles. In terms of biological role, GST isoenzymes appear to play a central role in the parasite detoxification system. Other functions are also suspected including a role in increasing the solubility of haematin in the parasite gut. This Schistosoma japonicum (Blood fluke) protein is Glutathione S-transferase class-mu 28 kDa isozyme.